The sequence spans 208 residues: Uracil phosphoribosyltransferase (208 aa).

5-phospho-alpha-D-ribose 1-diphosphate contacts are provided by residues R78, R103, and 130 to 138 (DPMFATGGT). Uracil is bound by residues I193 and 198–200 (GDA). 5-phospho-alpha-D-ribose 1-diphosphate is bound at residue D199.

This sequence belongs to the UPRTase family. Mg(2+) is required as a cofactor.

The catalysed reaction is UMP + diphosphate = 5-phospho-alpha-D-ribose 1-diphosphate + uracil. The protein operates within pyrimidine metabolism; UMP biosynthesis via salvage pathway; UMP from uracil: step 1/1. Its activity is regulated as follows. Allosterically activated by GTP. Its function is as follows. Catalyzes the conversion of uracil and 5-phospho-alpha-D-ribose 1-diphosphate (PRPP) to UMP and diphosphate. The chain is Uracil phosphoribosyltransferase from Campylobacter concisus (strain 13826).